Consider the following 554-residue polypeptide: 7-epi-sesquithujene synthase (554 aa).

Residues Asp-308 and Asp-312 each contribute to the Mg(2+) site. Residues Asp-308, Asp-312, Arg-449, and Asn-452 each coordinate substrate. The DDXXD motif signature appears at 308–312 (DDMFD). Positions 452, 456, and 460 each coordinate Mg(2+).

The protein belongs to the terpene synthase family. Monomer. Requires Mg(2+) as cofactor. The cofactor is Mn(2+). As to expression, highly expressed in the husk. Detected in leaf sheaths and leaves.

Its subcellular location is the cytoplasm. The enzyme catalyses (2E,6E)-farnesyl diphosphate = 7-epi-sesquithujene + diphosphate. The catalysed reaction is (2E,6E)-farnesyl diphosphate = (1S,5S,6R)-alpha-bergamotene + diphosphate. It carries out the reaction (2E,6E)-farnesyl diphosphate = (E)-beta-farnesene + diphosphate. It catalyses the reaction (2E,6E)-farnesyl diphosphate = (S)-beta-bisabolene + diphosphate. The enzyme catalyses (2Z,6E)-farnesyl diphosphate = (-)-beta-curcumene + diphosphate. The catalysed reaction is (2E,6E)-farnesyl diphosphate = gamma-curcumene + diphosphate. It carries out the reaction (2E,6E)-farnesyl diphosphate = sesquisabinene A + diphosphate. It participates in secondary metabolite biosynthesis; terpenoid biosynthesis. Its function is as follows. Sesquiterpene synthase involved in the production after herbivore attack of a blend of volatiles that attracts natural enemies of herbivores. Converts farnesyl diphosphate to (S)-beta-bisabolene and 7-epi-sesquithujene, along with a mixture of more than 20 other minor sesquiterpene olefins. Can also act in vitro as a monoterpene synthase, converting geranyl diphosphate to (S)-(-)-limonene, beta-myrcene and 11 other monoterpenes. This is 7-epi-sesquithujene synthase from Zea mays (Maize).